We begin with the raw amino-acid sequence, 351 residues long: Transmembrane protein 185-like (351 aa).

8 helical membrane-spanning segments follow: residues 16 to 36, 41 to 61, 81 to 101, 113 to 133, 154 to 174, 178 to 198, 212 to 232, and 244 to 264; these read LIYA…DGII, WAVF…ASVG, FKAM…EVLV, WLLV…ACVW, FIFI…VVCV, ILMS…VLFL, ITMA…EILL, and YVPV…TTFG.

This sequence belongs to the TMEM185 family.

Its subcellular location is the membrane. In Danio rerio (Zebrafish), this protein is Transmembrane protein 185-like.